The primary structure comprises 204 residues: Casparian strip membrane protein 2 (204 aa).

The Cytoplasmic portion of the chain corresponds to 1-41 (MKNESTFIDVPADSSSAMKGKAPLIGVAKDHTASGSGGYNR). A helical membrane pass occupies residues 42 to 62 (GLSIFDFLLRLAAIVAASVAA). Residues 63 to 92 (GTMFTSDETLPFFTQFLQFEAGYDDLPTFQ) lie on the Extracellular side of the membrane. The chain crosses the membrane as a helical span at residues 93 to 113 (FFVIAMSLVSGYIVLSLPISV). The Cytoplasmic portion of the chain corresponds to 114-125 (VTIVRPLAAAPR). A helical membrane pass occupies residues 126–146 (LLLLVLDTAVMGLTMAAASSA). Topologically, residues 147–178 (AAISYVAHNGNQNTNWLPICQQFFDFCQKTSG) are extracellular. Residues 179–199 (AVVSSFVAVVFFMILVVLSGV) form a helical membrane-spanning segment. Residues 200 to 204 (ALERH) lie on the Cytoplasmic side of the membrane.

Belongs to the Casparian strip membrane proteins (CASP) family. Homodimer and heterodimers.

The protein resides in the cell membrane. Its function is as follows. Regulates membrane-cell wall junctions and localized cell wall deposition. Required for establishment of the Casparian strip membrane domain (CSD) and the subsequent formation of Casparian strips, a cell wall modification of the root endodermis that determines an apoplastic barrier between the intraorganismal apoplasm and the extraorganismal apoplasm and prevents lateral diffusion. The protein is Casparian strip membrane protein 2 of Raphanus sativus (Radish).